A 328-amino-acid chain; its full sequence is Methionyl-tRNA formyltransferase (328 aa).

A (6S)-5,6,7,8-tetrahydrofolate-binding site is contributed by 121-124 (SLLP).

Belongs to the Fmt family.

The catalysed reaction is L-methionyl-tRNA(fMet) + (6R)-10-formyltetrahydrofolate = N-formyl-L-methionyl-tRNA(fMet) + (6S)-5,6,7,8-tetrahydrofolate + H(+). Attaches a formyl group to the free amino group of methionyl-tRNA(fMet). The formyl group appears to play a dual role in the initiator identity of N-formylmethionyl-tRNA by promoting its recognition by IF2 and preventing the misappropriation of this tRNA by the elongation apparatus. The chain is Methionyl-tRNA formyltransferase from Burkholderia thailandensis (strain ATCC 700388 / DSM 13276 / CCUG 48851 / CIP 106301 / E264).